The primary structure comprises 308 residues: Protoheme IX farnesyltransferase (308 aa).

8 helical membrane-spanning segments follow: residues 31–51, 53–73, 102–122, 124–144, 149–169, 170–190, 240–260, and 288–308; these read VIELLLVTAIPAMLLAQRGTV, PLLIVNTLIGGMLAAGGANAL, NALVFGLVLTAGSFLWLWWTT, LLSGLLALATIAFYVFIYTLL, TSQNVVWGGAAGCMPVMIGWS, AVTGTIQWPALVMFAIIFFWT, LALATGWLYAAVALVAGVWFL, and YLAVVFCALAIDSAIGLPHLF.

The protein belongs to the UbiA prenyltransferase family. Protoheme IX farnesyltransferase subfamily.

It is found in the cell membrane. The enzyme catalyses heme b + (2E,6E)-farnesyl diphosphate + H2O = Fe(II)-heme o + diphosphate. It participates in porphyrin-containing compound metabolism; heme O biosynthesis; heme O from protoheme: step 1/1. In terms of biological role, converts heme B (protoheme IX) to heme O by substitution of the vinyl group on carbon 2 of heme B porphyrin ring with a hydroxyethyl farnesyl side group. The sequence is that of Protoheme IX farnesyltransferase from Mycolicibacterium paratuberculosis (strain ATCC BAA-968 / K-10) (Mycobacterium paratuberculosis).